Reading from the N-terminus, the 473-residue chain is Zinc transporter SLC39A7 (473 aa).

Residues 11-31 form a helical membrane-spanning segment; that stretch reads VAVGLLTWAALGLLVAGHGGH. 2 stretches are compositionally biased toward basic and acidic residues: residues 44–56 and 66–114; these read GHSH…DFHH and HTHE…EHSH. The disordered stretch occupies residues 44–120; the sequence is GHSHRHSHED…EHSHGGYGES (77 aa). H66 bears the Pros-methylhistidine mark. A run of 3 helical transmembrane segments spans residues 138–158, 169–189, and 214–234; these read ALGA…LIPV, LQIL…LHLI, and GPIL…LVVE. The interval 243–316 is disordered; sequence GHEHSHGHGH…QHSGEEKAGS (74 aa). 2 positions are modified to phosphoserine: S278 and S279. The segment covering 298 to 316 has biased composition (basic and acidic residues); it reads RPKDGPVRPQHSGEEKAGS. A helical membrane pass occupies residues 388–408; sequence LLTAVGALAGTAFALLTEGGA. A disordered region spans residues 428 to 473; the sequence is GDQAATQASPRSTSLPPVGEEDFREDPGPRQKGQQEKSGINVNCVS. The segment covering 431-442 has biased composition (polar residues); that stretch reads AATQASPRSTSL. A compositionally biased stretch (basic and acidic residues) spans 452 to 462; it reads EDPGPRQKGQQ. Residues 463-473 are compositionally biased toward polar residues; sequence EKSGINVNCVS.

The protein belongs to the ZIP transporter (TC 2.A.5) family. KE4/Catsup subfamily. In terms of assembly, homodimer. Post-translationally, methylation at some His residue by METTL9 leads to reduced zinc-binding. Rapidly phosphorylated by CK2 following Zn(2+) treatment. This phosphorylation is required for efficient cytosolic Zn(2+) release.

Its subcellular location is the endoplasmic reticulum membrane. It localises to the golgi apparatus. The protein localises to the cis-Golgi network membrane. The catalysed reaction is Zn(2+)(in) = Zn(2+)(out). Functionally, transports Zn(2+) from the endoplasmic reticulum (ER)/Golgi apparatus to the cytosol, playing an essential role in the regulation of cytosolic zinc levels. Acts as a gatekeeper of zinc release from intracellular stores, requiring post-translational activation by phosphorylation on residues, resulting in activation of multiple downstream pathways leading to cell growth and proliferation. Has an essential role in B cell development and is required for proper B cell receptor signaling. Plays an important role in maintaining intestinal epithelial homeostasis and skin dermis development by regulating ER function. Controls cell signaling pathways involved in glucose metabolism in skeletal muscle. Has a protective role against ER stress in different biological contexts. Mediates Zn(2+)-induced ferroptosis. The chain is Zinc transporter SLC39A7 (SLC39A7) from Sus scrofa (Pig).